We begin with the raw amino-acid sequence, 1051 residues long: Kinesin-like protein KIN-UC (1051 aa).

Composition is skewed to low complexity over residues 1-12 (MSSSNSSSAVRS), 28-39 (NSNHAVSLSSSS), and 64-90 (SASS…PVRR). 2 disordered regions span residues 1–39 (MSSS…SSSS) and 51–109 (PGIA…RVSV). One can recognise a Kinesin motor domain in the interval 104–441 (RVRVSVRVRP…IMFGQRAMKI (338 aa)). 189-196 (GQTGTGKT) provides a ligand contact to ATP. The D-BOX motif lies at 411–419 (RTSLIITIG). Coiled coils occupy residues 452 to 534 (DYES…QKDQ) and 568 to 761 (DTSQ…KRYM). The span at 753-766 (NVVEEKRYMKEDLS) shows a compositional bias: basic and acidic residues. Positions 753-788 (NVVEEKRYMKEDLSKGSAESGAQTGSQRSQGLKKSL) are disordered. Residues 772–788 (SGAQTGSQRSQGLKKSL) are compositionally biased toward polar residues. 3 ARM repeats span residues 792–831 (RATM…NLAA), 833–873 (EANQ…NLAM), and 875–915 (EKSQ…NLCG). One copy of the ARM 4; degenerate repeat lies at 917–956 (EKFLKLLKEEEGIKGLLTMAQSGNIDIIAQVARGMANFAK).

It belongs to the TRAFAC class myosin-kinesin ATPase superfamily. Kinesin family. Ungrouped subfamily. As to quaternary structure, interacts (via C-terminus) with NEK5. In terms of tissue distribution, expressed in young root hair-forming cells and in root hair-producing cells at the boundary between the hypocotyl and root. Expressed in cotyledons, young leaves, trichomes and flowers.

The protein resides in the cytoplasm. Its subcellular location is the cytoskeleton. It localises to the spindle. It is found in the phragmoplast. Its function is as follows. Acts as a plus-end microtubule-dependent motor protein. Involved in the control of root hair tip growth by promoting microtubule depolymerization and limiting the accumulation of endoplasmic microtubules. In vitro, binds to polymerized actin through ARM repeats, and to polymerized tubulin through N-terminal motor domain. The polypeptide is Kinesin-like protein KIN-UC (Arabidopsis thaliana (Mouse-ear cress)).